The following is a 420-amino-acid chain: FLYWCH transcription factor 3 (420 aa).

Positions 87–104 are enriched in low complexity; the sequence is SSTSPDSQPSSSSSVMSS. 2 disordered regions span residues 87 to 107 and 119 to 138; these read SSTS…STDE and KINK…YTPR. Residues 123 to 134 show a composition bias toward polar residues; the sequence is AQRQSSPNSSKP. An FLYWCH-type zinc finger spans residues 140–195; that stretch reads IRERVLFDEHLYVFDKCSYDSKKRFFRCERKNTCPARIHTPFDAERVIHKVQVHNH.

Probable transcription factor. May bind to the promoters of target genes, including micro-RNA genes, in order to repress expression, and acting redundantly with flh-2. The sequence is that of FLYWCH transcription factor 3 from Caenorhabditis elegans.